We begin with the raw amino-acid sequence, 321 residues long: XylDLEGF operon transcriptional activator 1 (321 aa).

The HTH araC/xylS-type domain maps to 214–315 (ERVVQFIEEN…GELPSDTLRQ (102 aa)). 2 DNA-binding regions (H-T-H motif) span residues 231–252 (ERLAELAMMSPRSLYNLFEKHA) and 282–305 (ITEIALDYGFLHLGRFAENYRSAF).

The protein resides in the cytoplasm. Its function is as follows. Regulatory protein of the TOL plasmid xyl operons. XylS activates the xylXYZLTEGFJQKIH operon required for the degradation of toluene, m-xylene and p-xylene. The sequence is that of XylDLEGF operon transcriptional activator 1 (xylS1) from Pseudomonas putida (Arthrobacter siderocapsulatus).